The chain runs to 692 residues: Structure-specific endonuclease subunit SLX4 (692 aa).

A disordered region spans residues 39–59 (SDDEDQDEEQETEIPPEEGDD).

The protein belongs to the SLX4 family. In terms of assembly, forms a heterodimer with SLX1. Post-translationally, phosphorylated in response to DNA damage.

It is found in the nucleus. In terms of biological role, regulatory subunit of the SLX1-SLX4 structure-specific endonuclease that resolves DNA secondary structures generated during DNA repair and recombination. Has endonuclease activity towards branched DNA substrates, introducing single-strand cuts in duplex DNA close to junctions with ss-DNA. This chain is Structure-specific endonuclease subunit SLX4, found in Kluyveromyces lactis (strain ATCC 8585 / CBS 2359 / DSM 70799 / NBRC 1267 / NRRL Y-1140 / WM37) (Yeast).